The primary structure comprises 948 residues: Protein translocase subunit SecA (948 aa).

Residues glutamine 91, 109-113, and aspartate 509 each bind ATP; that span reads GEGKT.

It belongs to the SecA family. In terms of assembly, monomer and homodimer. Part of the essential Sec protein translocation apparatus which comprises SecA, SecYEG and auxiliary proteins SecDF. Other proteins may also be involved.

The protein resides in the cell inner membrane. It is found in the cellular thylakoid membrane. It localises to the cytoplasm. It catalyses the reaction ATP + H2O + cellular proteinSide 1 = ADP + phosphate + cellular proteinSide 2.. Functionally, part of the Sec protein translocase complex. Interacts with the SecYEG preprotein conducting channel. Has a central role in coupling the hydrolysis of ATP to the transfer of proteins into and across the cell membrane, serving as an ATP-driven molecular motor driving the stepwise translocation of polypeptide chains across the membrane. In terms of biological role, probably participates in protein translocation into and across both the cytoplasmic and thylakoid membranes in cyanobacterial cells. This chain is Protein translocase subunit SecA, found in Synechococcus elongatus (strain ATCC 33912 / PCC 7942 / FACHB-805) (Anacystis nidulans R2).